We begin with the raw amino-acid sequence, 491 residues long: Blue-light-activated histidine kinase (491 aa).

Positions 19-92 (EANPFTAAVE…EIIHSALEAE (74 aa)) constitute a PAS 1 domain. Cys-69 bears the S-4a-FMN cysteine mark. Positions 93-147 (QSVEIDILNYKKSGEPFWNRLHISPVKTENGELHHFVSSQLDVTLELGKLVELEK) constitute a PAC domain. The PAS 2 domain maps to 159-230 (SSDQLQYIVE…QRSQESFATG (72 aa)). The interval 286–368 (EISHRFKNSM…GHRIRTSGPE (83 aa)) is HWE histidine kinase domain. Residue His-289 is modified to Phosphohistidine; by autocatalysis.

In terms of processing, FMN binds covalently to cysteine after exposure to blue light and this bond is spontaneously broken in the dark.

The enzyme catalyses ATP + protein L-histidine = ADP + protein N-phospho-L-histidine.. Its function is as follows. Photosensitive kinase that is involved in increased bacterial virulence upon exposure to light. The chain is Blue-light-activated histidine kinase from Brucella anthropi (strain ATCC 49188 / DSM 6882 / CCUG 24695 / JCM 21032 / LMG 3331 / NBRC 15819 / NCTC 12168 / Alc 37) (Ochrobactrum anthropi).